We begin with the raw amino-acid sequence, 548 residues long: Lipase 2 (548 aa).

The N-terminal stretch at 1–14 is a signal peptide; the sequence is MKLCLLALGAAVAA. An intrachain disulfide couples Cys74 to Cys111. Ser223 acts as the Acyl-ester intermediate in catalysis. Residues Cys282 and Cys291 are joined by a disulfide bond. The active-site Charge relay system is the Glu355. The N-linked (GlcNAc...) asparagine glycan is linked to Asn365. The active-site Charge relay system is His463.

The protein belongs to the type-B carboxylesterase/lipase family.

The catalysed reaction is a triacylglycerol + H2O = a diacylglycerol + a fatty acid + H(+). The sequence is that of Lipase 2 (LIP2) from Diutina rugosa (Yeast).